We begin with the raw amino-acid sequence, 1131 residues long: Translation initiation factor IF-2 (1131 aa).

Residues 49–542 (KFKGSVSSNE…AFIMPKPQQS (494 aa)) are disordered. Over residues 60-75 (KSIDNGKASRVEKPEK) the composition is skewed to basic and acidic residues. Polar residues-rich tracts occupy residues 76 to 88 (NNSV…QTPS) and 108 to 125 (SEQN…NIQS). Residues 127-138 (GDRKYQHTDRRP) show a composition bias toward basic and acidic residues. Over residues 139–152 (QGNNGEGPQTSTNS) the composition is skewed to polar residues. 2 stretches are compositionally biased toward basic and acidic residues: residues 164–180 (GDRR…RPYN) and 223–239 (GDRR…RPYN). The span at 411–436 (GQGGYGGRPQGQGSYGGRPQGQGGYA) shows a compositional bias: gly residues. Composition is skewed to basic and acidic residues over residues 450–479 (KDFD…KSSI) and 487–530 (LTKE…DPNR). Residues 632–801 (KRPPVVCVMG…ILTAEMGELK (170 aa)) enclose the tr-type G domain. The segment at 641 to 648 (GHVDHGKT) is G1. GTP is bound at residue 641 to 648 (GHVDHGKT). Positions 666 to 670 (GITQH) are G2. A G3 region spans residues 687–690 (DTPG). GTP-binding positions include 687–691 (DTPGH) and 741–744 (NKID). The tract at residues 741–744 (NKID) is G4. The tract at residues 777 to 779 (SAH) is G5.

It belongs to the TRAFAC class translation factor GTPase superfamily. Classic translation factor GTPase family. IF-2 subfamily.

The protein resides in the cytoplasm. One of the essential components for the initiation of protein synthesis. Protects formylmethionyl-tRNA from spontaneous hydrolysis and promotes its binding to the 30S ribosomal subunits. Also involved in the hydrolysis of GTP during the formation of the 70S ribosomal complex. In Lachnoclostridium phytofermentans (strain ATCC 700394 / DSM 18823 / ISDg) (Clostridium phytofermentans), this protein is Translation initiation factor IF-2.